A 70-amino-acid chain; its full sequence is Gas vesicle protein A (70 aa).

It belongs to the gas vesicle GvpA family. As to quaternary structure, the gas vesicle shell is 2 nm thick and consists of a single layer of this protein. It forms helical ribs nearly perpendicular to the long axis of the vesicle.

The protein resides in the gas vesicle shell. Functionally, gas vesicles are hollow, gas filled proteinaceous nanostructures found in some microorganisms. During planktonic growth they allow positioning of the organism at a favorable depth for light or nutrient acquisition. GvpA forms the protein shell. In Bradyrhizobium sp. (strain ORS 278), this protein is Gas vesicle protein A.